The primary structure comprises 440 residues: Replication factor C large subunit (440 aa).

48–55 (GPPGVGKT) contributes to the ATP binding site.

This sequence belongs to the activator 1 small subunits family. RfcL subfamily. In terms of assembly, heteromultimer composed of small subunits (RfcS) and large subunits (RfcL).

In terms of biological role, part of the RFC clamp loader complex which loads the PCNA sliding clamp onto DNA. The chain is Replication factor C large subunit from Sulfurisphaera tokodaii (strain DSM 16993 / JCM 10545 / NBRC 100140 / 7) (Sulfolobus tokodaii).